We begin with the raw amino-acid sequence, 296 residues long: Protoheme IX farnesyltransferase (296 aa).

Residues 1-9 are Cytoplasmic-facing; the sequence is MMFKQYLQV. The helical transmembrane segment at 10 to 28 threads the bilayer; that stretch reads TKPGIIFGNLISVIGGFLL. The Periplasmic portion of the chain corresponds to 29-37; sequence ASKGSIDYP. Residues 38–56 traverse the membrane as a helical segment; sequence LFIYTLVGVSLVVASGCVF. Residues 57–78 are Cytoplasmic-facing; the sequence is NNYIDRDIDRKMERTKNRVLVK. Residues 79–97 traverse the membrane as a helical segment; sequence GLISPGVSLVYATLLGIAG. Residues 98-107 lie on the Periplasmic side of the membrane; it reads FMLLWFGANP. Residues 108–126 traverse the membrane as a helical segment; the sequence is LACWLGVMGFVVYVGVYSL. Residues 127 to 197 lie on the Cytoplasmic side of the membrane; it reads YMKRHSVYGT…YQAANIPVLP (71 aa). A helical transmembrane segment spans residues 198–216; the sequence is VVKGISVAKNHITLYIIAF. The Periplasmic portion of the chain corresponds to 217-228; the sequence is AVATLMLTLGGY. The helical transmembrane segment at 229-247 threads the bilayer; it reads AGYKYLVVAAAVSVWWLGM. Residues 248-268 lie on the Cytoplasmic side of the membrane; sequence ALRGYKVEDDKVWARKLFGFS. A helical membrane pass occupies residues 269–287; sequence IIAITALSIMMSVDFMVPN. At 288 to 296 the chain is on the periplasmic side; sequence SQNLLTYVW.

Belongs to the UbiA prenyltransferase family. Protoheme IX farnesyltransferase subfamily.

It is found in the cell inner membrane. The enzyme catalyses heme b + (2E,6E)-farnesyl diphosphate + H2O = Fe(II)-heme o + diphosphate. It functions in the pathway porphyrin-containing compound metabolism; heme O biosynthesis; heme O from protoheme: step 1/1. Converts heme B (protoheme IX) to heme O by substitution of the vinyl group on carbon 2 of heme B porphyrin ring with a hydroxyethyl farnesyl side group. This is Protoheme IX farnesyltransferase from Salmonella typhimurium (strain LT2 / SGSC1412 / ATCC 700720).